The chain runs to 719 residues: DNA replication licensing factor MCM7 (719 aa).

Alanine 2 is subject to N-acetylalanine. Glycyl lysine isopeptide (Lys-Gly) (interchain with G-Cter in SUMO2) cross-links involve residues lysine 15 and lysine 28. Phosphoserine occurs at positions 121 and 314. An MCM domain is found at 332–538 (FYEKLAASIA…NDLRLAQHIT (207 aa)). Tyrosine 345 contributes to the ATP binding site. Serine 365 carries the post-translational modification Phosphoserine. ATP contacts are provided by glycine 384, alanine 386, lysine 387, serine 388, and asparagine 489. Serine 500 carries the post-translational modification Phosphoserine. Positions 513-516 (SRFD) match the Arginine finger motif. Position 514 (arginine 514) interacts with ATP. The interval 521–564 (IQDRPDRDNDLRLAQHITYVHQHSRQPPAQFEPLDMKLMRRYIA) is interaction with RAD17. The interval 577–719 (LADYITAAYV…NTARTRITFV (143 aa)) is interaction with ATRIP. An ATP-binding site is contributed by arginine 604. Serine 678 is subject to Phosphoserine.

Belongs to the MCM family. As to quaternary structure, component of the MCM2-7 complex. The complex forms a toroidal hexameric ring with the proposed subunit order MCM2-MCM6-MCM4-MCM7-MCM3-MCM5. Component of the CMG helicase complex, a hexameric ring of related MCM2-7 subunits stabilized by CDC45 and the tetrameric GINS complex. Interacts with the ATR-ATRIP complex and with RAD17. Interacts with TIPIN. Interacts with MCMBP. Interacts with ANKRD17. Component of the replisome complex composed of at least DONSON, MCM2, MCM7, PCNA and TICRR. In terms of processing, O-glycosylated (O-GlcNAcylated), in a cell cycle-dependent manner. Post-translationally, ubiquitinated by ECS(LRR1) E3 ubiquitin-protein ligase complex when forks converge following formation of DNA interstrand cross-links. During mitosis, ubiquitinated by TRAIP when forks converge following formation of DNA interstrand cross-links. Short ubiquitin chains on MCM7 promote recruitment of DNA glycosylase NEIL3. If the interstrand cross-link cannot be cleaved by NEIL3, the ubiquitin chains continue to grow on MCM7, promoting the unloading of the CMG helicase complex by the VCP/p97 ATPase.

The protein resides in the nucleus. Its subcellular location is the chromosome. It carries out the reaction ATP + H2O = ADP + phosphate + H(+). Functionally, acts as a component of the MCM2-7 complex (MCM complex) which is the replicative helicase essential for 'once per cell cycle' DNA replication initiation and elongation in eukaryotic cells. Core component of CDC45-MCM-GINS (CMG) helicase, the molecular machine that unwinds template DNA during replication, and around which the replisome is built. The active ATPase sites in the MCM2-7 ring are formed through the interaction surfaces of two neighboring subunits such that a critical structure of a conserved arginine finger motif is provided in trans relative to the ATP-binding site of the Walker A box of the adjacent subunit. The six ATPase active sites, however, are likely to contribute differentially to the complex helicase activity. Required for S-phase checkpoint activation upon UV-induced damage. In Bos taurus (Bovine), this protein is DNA replication licensing factor MCM7 (MCM7).